The sequence spans 365 residues: tRNA N6-adenosine threonylcarbamoyltransferase (365 aa).

Residues H122 and H126 each contribute to the Fe cation site. Residues 147–151 (LVSGG), D180, G193, and N293 each bind substrate. Fe cation is bound at residue D321. The disordered stretch occupies residues 340 to 365 (PNEIDTAARPRWPLSERTPATPEHVS).

The protein belongs to the KAE1 / TsaD family. Fe(2+) serves as cofactor.

It localises to the cytoplasm. The catalysed reaction is L-threonylcarbamoyladenylate + adenosine(37) in tRNA = N(6)-L-threonylcarbamoyladenosine(37) in tRNA + AMP + H(+). Its function is as follows. Required for the formation of a threonylcarbamoyl group on adenosine at position 37 (t(6)A37) in tRNAs that read codons beginning with adenine. Is involved in the transfer of the threonylcarbamoyl moiety of threonylcarbamoyl-AMP (TC-AMP) to the N6 group of A37, together with TsaE and TsaB. TsaD likely plays a direct catalytic role in this reaction. This chain is tRNA N6-adenosine threonylcarbamoyltransferase, found in Gluconobacter oxydans (strain 621H) (Gluconobacter suboxydans).